A 231-amino-acid polypeptide reads, in one-letter code: Ribose-5-phosphate isomerase A (231 aa).

Substrate-binding positions include 23-26, 80-83, and 93-96; these read SGST, DGAD, and KGGG. The Proton acceptor role is filled by glutamate 102. Position 120 (lysine 120) interacts with substrate.

This sequence belongs to the ribose 5-phosphate isomerase family. In terms of assembly, homodimer.

It catalyses the reaction aldehydo-D-ribose 5-phosphate = D-ribulose 5-phosphate. It participates in carbohydrate degradation; pentose phosphate pathway; D-ribose 5-phosphate from D-ribulose 5-phosphate (non-oxidative stage): step 1/1. Catalyzes the reversible conversion of ribose-5-phosphate to ribulose 5-phosphate. This is Ribose-5-phosphate isomerase A from Prochlorococcus marinus subsp. pastoris (strain CCMP1986 / NIES-2087 / MED4).